The primary structure comprises 931 residues: GPI ethanolamine phosphate transferase 1 (931 aa).

Residue methionine 1 is a topological domain, cytoplasmic. Residues 2 to 24 traverse the membrane as a helical segment; that stretch reads LLFFTLGLLIHFVFFASIFDIYF. The Lumenal portion of the chain corresponds to 25-442; that stretch reads TSPLVHGMTP…SYYHTYDRFF (418 aa). N-linked (GlcNAc...) asparagine glycosylation is found at asparagine 128, asparagine 192, and asparagine 350. A helical transmembrane segment spans residues 443–463; that stretch reads LGVNVVIGFVGWISYASLLII. Topologically, residues 464–482 are cytoplasmic; it reads KSHSNLIKGVSKEVKKPSH. The helical transmembrane segment at 483 to 503 threads the bilayer; the sequence is LLPCSFVAIGILVAFFLLIQA. Residues 504–508 lie on the Lumenal side of the membrane; that stretch reads CPWTY. The chain crosses the membrane as a helical span at residues 509–529; it reads YVYGLLPLPIWYAVLREFQVI. The Cytoplasmic segment spans residues 530–543; the sequence is QDLVVSVLTYPLSH. The helical transmembrane segment at 544 to 564 threads the bilayer; it reads FVGYLLAFTLGIEVLVLSFFY. Position 565 (arginine 565) is a topological domain, lumenal. The chain crosses the membrane as a helical span at residues 566-586; that stretch reads YMLTAGLTAFAAWPFLTRLWT. Over 587–591 the chain is Cytoplasmic; sequence RAKMT. Residues 592–612 traverse the membrane as a helical segment; sequence SLSWTFFSLLLAVFPLMPVVG. Topologically, residues 613–618 are lumenal; it reads RKPDIS. Residues 619–639 traverse the membrane as a helical segment; sequence LVMGAGLLVLLLSLCVVTSLM. Topologically, residues 640 to 649 are cytoplasmic; that stretch reads KRKDSFIKEE. A helical transmembrane segment spans residues 650-670; the sequence is LLVHLLQVLSTVLSMYVVYST. Residues 671 to 685 lie on the Lumenal side of the membrane; the sequence is QSSLLRKQGLPLMNQ. Residues 686 to 706 traverse the membrane as a helical segment; it reads IISWATLASSLVVPLLSSPVL. Topologically, residues 707–723 are cytoplasmic; it reads FQRLFSILLSLMSTYLL. Residues 724-744 traverse the membrane as a helical segment; sequence LSTGYEALFPLVLSCLMFVWI. Over 745–786 the chain is Lumenal; sequence NIEQETLQQSGVCCKQKLTSIQFSYNTDITQFRQLYLDDIRR. A helical transmembrane segment spans residues 787-807; sequence AFFLVFFLVTAFFGTGNIASI. Over 808–824 the chain is Cytoplasmic; the sequence is NSFDLASVYCFLTVFSP. Residues 825 to 845 traverse the membrane as a helical segment; sequence FMMGALMMWKILIPFVLVMCA. The Lumenal segment spans residues 846-858; sequence FEAVQLTTQLSSK. The helical transmembrane segment at 859–879 threads the bilayer; sequence SLFLIVLVISDIMALHFFFLV. The Cytoplasmic portion of the chain corresponds to 880-894; that stretch reads KDYGSWLDIGTSISH. A helical transmembrane segment spans residues 895-915; it reads YVIVMSMTIFLVFLNGLAQLL. The Lumenal segment spans residues 916-931; that stretch reads TTKKLRLCGKPKSHFM.

This sequence belongs to the PIGG/PIGN/PIGO family. PIGN subfamily.

The protein resides in the endoplasmic reticulum membrane. It participates in glycolipid biosynthesis; glycosylphosphatidylinositol-anchor biosynthesis. Functionally, ethanolamine phosphate transferase that catalyzes an ethanolamine phosphate (EtNP) transfer from phosphatidylethanolamine (PE) to the 2-OH position of the first alpha-1,4-linked mannose of the alpha-D-Man-(1-&gt;6)-alpha-D-Man-(1-&gt;4)-alpha-D-GlcN-(1-&gt;6)-(1-radyl,2-acyl-sn-glycero-3-phospho)-2-acyl-inositol (also termed H3) intermediate to generate an alpha-D-Man-(1-&gt;6)-2-PEtn-alpha-D-Man-(1-&gt;4)-alpha-D-GlcN-(1-&gt;6)-(1-radyl,2-acyl-sn-glycero-3-phospho)-2-acyl-inositol and participates in the eighth step of the glycosylphosphatidylinositol-anchor biosynthesis. May act as suppressor of replication stress and chromosome missegregation. The sequence is that of GPI ethanolamine phosphate transferase 1 from Homo sapiens (Human).